Reading from the N-terminus, the 506-residue chain is Maturase K (506 aa).

The protein belongs to the intron maturase 2 family. MatK subfamily.

It is found in the plastid. Its subcellular location is the chloroplast. Usually encoded in the trnK tRNA gene intron. Probably assists in splicing its own and other chloroplast group II introns. This chain is Maturase K, found in Wisteria frutescens (American wisteria).